An 80-amino-acid polypeptide reads, in one-letter code: MNKVLFLCLVVLCATSAFAAEEEYVERAPVKRALLSCRCEGKTEYGDKWLFHGGCPNNYGYNYKCFMKPGAVCCYPQNGR.

The N-terminal stretch at 1 to 19 is a signal peptide; sequence MNKVLFLCLVVLCATSAFA. A propeptide spanning residues 20–30 is cleaved from the precursor; it reads AEEEYVERAPV. Intrachain disulfides connect C37/C73, C39/C65, and C55/C74. P56 carries the hydroxyproline modification.

The protein belongs to the sea anemone type 3 (BDS) potassium channel toxin family.

The protein resides in the secreted. Its subcellular location is the nematocyst. Its function is as follows. Neurotoxon that induces paralysis when injected into crabs. The polypeptide is Delta-actitoxin-Amc2a (Antheopsis maculata (Sea anemone)).